The sequence spans 356 residues: 3-dehydroquinate synthase (356 aa).

NAD(+)-binding positions include D69–K74, G103–D107, T127–T128, K140, and K149. Positions 182, 245, and 262 each coordinate Zn(2+).

Belongs to the sugar phosphate cyclases superfamily. Dehydroquinate synthase family. Requires Co(2+) as cofactor. Zn(2+) is required as a cofactor. It depends on NAD(+) as a cofactor.

The protein resides in the cytoplasm. It carries out the reaction 7-phospho-2-dehydro-3-deoxy-D-arabino-heptonate = 3-dehydroquinate + phosphate. Its pathway is metabolic intermediate biosynthesis; chorismate biosynthesis; chorismate from D-erythrose 4-phosphate and phosphoenolpyruvate: step 2/7. Functionally, catalyzes the conversion of 3-deoxy-D-arabino-heptulosonate 7-phosphate (DAHP) to dehydroquinate (DHQ). This chain is 3-dehydroquinate synthase, found in Pseudoalteromonas translucida (strain TAC 125).